The sequence spans 67 residues: Protein AaeX (67 aa).

Transmembrane regions (helical) follow at residues 3–23 and 39–59; these read LLPV…ELLI and GIYE…CCLF.

This sequence belongs to the AaeX family.

Its subcellular location is the cell membrane. The sequence is that of Protein AaeX from Yersinia pseudotuberculosis serotype O:1b (strain IP 31758).